The following is a 178-amino-acid chain: uncharacterized protein (178 aa).

2 disordered regions span residues 89–115 (NEEQ…RLSI) and 136–178 (DMPT…EIKA). Positions 98–109 (ASHGSTSSATST) are enriched in low complexity. Over residues 167–178 (DSDEEEEEEIKA) the composition is skewed to acidic residues.

It localises to the cytoplasm. Its subcellular location is the nucleus. This is an uncharacterized protein from Schizosaccharomyces pombe (strain 972 / ATCC 24843) (Fission yeast).